Here is a 355-residue protein sequence, read N- to C-terminus: Uroporphyrinogen decarboxylase (355 aa).

Substrate contacts are provided by residues 27-31 (RQAGR), Asp77, Tyr154, Thr209, and His328.

It belongs to the uroporphyrinogen decarboxylase family. Homodimer.

Its subcellular location is the cytoplasm. It carries out the reaction uroporphyrinogen III + 4 H(+) = coproporphyrinogen III + 4 CO2. Its pathway is porphyrin-containing compound metabolism; protoporphyrin-IX biosynthesis; coproporphyrinogen-III from 5-aminolevulinate: step 4/4. Catalyzes the decarboxylation of four acetate groups of uroporphyrinogen-III to yield coproporphyrinogen-III. The sequence is that of Uroporphyrinogen decarboxylase from Photobacterium profundum (strain SS9).